The following is a 235-amino-acid chain: MNKKEQLYEGKAKKVFATDNPDLVIQEFKDDATAFNNKKKGTIADKGVVNNAISCKLFTLLEQHGIRTHLVEKLSEREMLCRHLDIIKAEVVVRNIAAGSLVRRYGFAEGTVLECPIVELYLKDDDLDDPLMIEAHAVALGVGTFEELAHLKQQAEVINTVLRSFFAERKLKLVDFKLEFGRHNGEILLGDEISPDTCRFWDLATNEKLDKDRFRFDLGSVEEAYSEVERRVLEL.

This sequence belongs to the SAICAR synthetase family.

It carries out the reaction 5-amino-1-(5-phospho-D-ribosyl)imidazole-4-carboxylate + L-aspartate + ATP = (2S)-2-[5-amino-1-(5-phospho-beta-D-ribosyl)imidazole-4-carboxamido]succinate + ADP + phosphate + 2 H(+). It participates in purine metabolism; IMP biosynthesis via de novo pathway; 5-amino-1-(5-phospho-D-ribosyl)imidazole-4-carboxamide from 5-amino-1-(5-phospho-D-ribosyl)imidazole-4-carboxylate: step 1/2. The sequence is that of Phosphoribosylaminoimidazole-succinocarboxamide synthase from Chlorobium chlorochromatii (strain CaD3).